The sequence spans 1206 residues: Pre-mRNA-splicing factor prp12 (1206 aa).

It belongs to the RSE1 family. As to quaternary structure, belongs to the 40S cdc5-associated complex (or cwf complex), a spliceosome sub-complex reminiscent of a late-stage spliceosome composed of the U2, U5 and U6 snRNAs and at least brr2, cdc5, cwf2/prp3, cwf3/syf1, cwf4/syf3, cwf5/ecm2, spp42/cwf6, cwf7/spf27, cwf8, cwf9, cwf10, cwf11, cwf12, prp45/cwf13, cwf14, cwf15, cwf16, cwf17, cwf18, cwf19, cwf20, cwf21, cwf22, cwf23, cwf24, cwf25, cwf26, cyp7/cwf27, cwf28, cwf29/ist3, lea1, msl1, prp5/cwf1, prp10, prp12/sap130, prp17, prp22, sap61, sap62, sap114, sap145, slu7, smb1, smd1, smd3, smf1, smg1 and syf2.

The protein localises to the nucleus. Functionally, involved in mRNA splicing and G2/M transition. The protein is Pre-mRNA-splicing factor prp12 (prp12) of Schizosaccharomyces pombe (strain 972 / ATCC 24843) (Fission yeast).